Consider the following 141-residue polypeptide: Hemoglobin subunit alpha (141 aa).

Residues Val1 to Arg141 form the Globin domain. Ser3 is modified (phosphoserine). Lys7 and Lys11 each carry N6-succinyllysine. Position 16 is an N6-acetyllysine; alternate (Lys16). Lys16 is modified (N6-succinyllysine; alternate). Tyr24 bears the Phosphotyrosine mark. Lys40 bears the N6-succinyllysine mark. His58 is an O2 binding site. Position 87 (His87) interacts with heme b. The residue at position 102 (Ser102) is a Phosphoserine. Thr108 is modified (phosphothreonine). Ser124 is subject to Phosphoserine. A phosphothreonine mark is found at Thr134 and Thr137. A Phosphoserine modification is found at Ser138.

Belongs to the globin family. In terms of assembly, heterotetramer of two alpha chains and two beta chains. In terms of tissue distribution, red blood cells.

Involved in oxygen transport from the lung to the various peripheral tissues. In terms of biological role, hemopressin acts as an antagonist peptide of the cannabinoid receptor CNR1. Hemopressin-binding efficiently blocks cannabinoid receptor CNR1 and subsequent signaling. This is Hemoglobin subunit alpha (HBA) from Erinaceus europaeus (Western European hedgehog).